The chain runs to 311 residues: uncharacterized protein (311 aa).

Helical transmembrane passes span 11–31 (LDNW…GYLS), 34–54 (VGIV…FLSL), 72–92 (LAIS…LFGI), 101–121 (HVIV…FVAQ), 147–167 (IEGI…WYLM), 198–218 (WFGV…FALS), 233–253 (GFIA…SIVI), 257–277 (FALA…TYLL), and 279–299 (TIPF…NVGP).

The protein resides in the cell membrane. This is an uncharacterized protein from Mycoplasma pneumoniae (strain ATCC 29342 / M129 / Subtype 1) (Mycoplasmoides pneumoniae).